A 230-amino-acid polypeptide reads, in one-letter code: DNA mismatch repair protein MutH (230 aa).

It belongs to the MutH family.

It is found in the cytoplasm. In terms of biological role, sequence-specific endonuclease that cleaves unmethylated GATC sequences. It is involved in DNA mismatch repair. The sequence is that of DNA mismatch repair protein MutH from Enterobacter sp. (strain 638).